We begin with the raw amino-acid sequence, 282 residues long: Small ribosomal subunit protein uS2 (282 aa).

The interval Ala-245–Lys-266 is disordered.

This sequence belongs to the universal ribosomal protein uS2 family.

The sequence is that of Small ribosomal subunit protein uS2 (rpsB) from Chlamydia trachomatis serovar D (strain ATCC VR-885 / DSM 19411 / UW-3/Cx).